A 193-amino-acid chain; its full sequence is 3-isopropylmalate dehydratase small subunit (193 aa).

This sequence belongs to the LeuD family. LeuD type 1 subfamily. In terms of assembly, heterodimer of LeuC and LeuD.

It catalyses the reaction (2R,3S)-3-isopropylmalate = (2S)-2-isopropylmalate. Its pathway is amino-acid biosynthesis; L-leucine biosynthesis; L-leucine from 3-methyl-2-oxobutanoate: step 2/4. Functionally, catalyzes the isomerization between 2-isopropylmalate and 3-isopropylmalate, via the formation of 2-isopropylmaleate. The chain is 3-isopropylmalate dehydratase small subunit from Bacillus cereus (strain 03BB102).